Consider the following 228-residue polypeptide: Urease accessory protein UreH (228 aa).

Helical transmembrane passes span 48-68 (VFWG…IILM), 79-99 (SLEF…ILSL), 130-150 (LFIG…LTMS), 162-182 (ILFF…LIGI), and 196-216 (AFIQ…MYNL).

This sequence belongs to the NiCoT transporter (TC 2.A.52) family.

It localises to the cell membrane. Probably facilitates nickel incorporation. May constitute a multicomponent high-affinity nickel transporter. Not essential for the expression of catalytically active urease. This Bacillus sp. (strain TB-90) protein is Urease accessory protein UreH (ureH).